An 833-amino-acid chain; its full sequence is A disintegrin and metalloproteinase with thrombospondin motifs 4 (833 aa).

Positions 1–49 (MSQMGLHPRRGLTGHWLQRFQPCLPLHTVQWRRLLLLAFLLSLAWPASP) are cleaved as a signal peptide. Residues 50 to 208 (LPREEEIVFP…PSPISRRTKR (159 aa)) constitute a propeptide that is removed on maturation. An N-linked (GlcNAc...) asparagine glycan is attached at Asn63. Residues 180–204 (KSPASSQGPMCTVKAPSGSPSPISR) form a disordered region. The Cysteine switch signature appears at 188-195 (PMCTVKAP). A Zn(2+)-binding site is contributed by Cys190. The Peptidase M12B domain maps to 214-424 (RFVETLVVAD…GYGHCLLDKP (211 aa)). 11 disulfide bridges follow: Cys289–Cys341, Cys318–Cys323, Cys335–Cys419, Cys373–Cys403, Cys445–Cys468, Cys456–Cys478, Cys463–Cys497, Cys491–Cys502, Cys528–Cys565, Cys532–Cys570, and Cys543–Cys555. Asn299 carries an N-linked (GlcNAc...) asparagine glycan. His357 is a Zn(2+) binding site. Glu358 is a catalytic residue. Residues His361 and His367 each coordinate Zn(2+). Positions 433-515 (TFPGKDYDAD…DQLKDFNVPQ (83 aa)) constitute a Disintegrin domain. The 56-residue stretch at 516–571 (AGGWGPWGPWGDCSRTCGGGVQFSSRDCTRPVPRNGGKYCEGRRTRFRSCNTENCP) folds into the TSP type-1 domain. The spacer stretch occupies residues 682-833 (SKQSGSFKKF…LRKRPWAGRK (152 aa)).

Interacts with SRPX2. The cofactor is Zn(2+). Post-translationally, the precursor is cleaved by a furin endopeptidase. Glycosylated. Can be O-fucosylated by POFUT2 on a serine or a threonine residue found within the consensus sequence C1-X(2)-(S/T)-C2-G of the TSP type-1 repeat domains where C1 and C2 are the first and second cysteine residue of the repeat, respectively. Fucosylated repeats can then be further glycosylated by the addition of a beta-1,3-glucose residue by the glucosyltransferase, B3GALTL. Fucosylation mediates the efficient secretion of ADAMTS family members. Can also be C-glycosylated with one or two mannose molecules on tryptophan residues within the consensus sequence W-X-X-W of the TPRs, and N-glycosylated. These other glycosylations can also facilitate secretion.

It localises to the secreted. It is found in the extracellular space. The protein resides in the extracellular matrix. The catalysed reaction is Glutamyl endopeptidase. Bonds cleaved include 370-Thr-Glu-Gly-Glu-|-Ala-Arg-Gly-Ser-377 in the interglobular domain of mammalian aggrecan.. In terms of biological role, cleaves aggrecan, a cartilage proteoglycan, at the '392-Glu-|-Ala-393' site and may be involved in its turnover. Also cleaves COMP. May play an important role in the destruction of aggrecan in arthritic diseases. The chain is A disintegrin and metalloproteinase with thrombospondin motifs 4 (Adamts4) from Mus musculus (Mouse).